Here is a 365-residue protein sequence, read N- to C-terminus: Succinyl-diaminopimelate desuccinylase (365 aa).

Zn(2+) is bound at residue histidine 65. Aspartate 67 is an active-site residue. Aspartate 96 contributes to the Zn(2+) binding site. Catalysis depends on glutamate 126, which acts as the Proton acceptor. Positions 127, 155, and 340 each coordinate Zn(2+).

It belongs to the peptidase M20A family. DapE subfamily. In terms of assembly, homodimer. Zn(2+) serves as cofactor. The cofactor is Co(2+).

The enzyme catalyses N-succinyl-(2S,6S)-2,6-diaminopimelate + H2O = (2S,6S)-2,6-diaminopimelate + succinate. Its pathway is amino-acid biosynthesis; L-lysine biosynthesis via DAP pathway; LL-2,6-diaminopimelate from (S)-tetrahydrodipicolinate (succinylase route): step 3/3. In terms of biological role, catalyzes the hydrolysis of N-succinyl-L,L-diaminopimelic acid (SDAP), forming succinate and LL-2,6-diaminopimelate (DAP), an intermediate involved in the bacterial biosynthesis of lysine and meso-diaminopimelic acid, an essential component of bacterial cell walls. This chain is Succinyl-diaminopimelate desuccinylase, found in Campylobacter jejuni subsp. jejuni serotype O:6 (strain 81116 / NCTC 11828).